The sequence spans 202 residues: Glycerol-3-phosphate acyltransferase (202 aa).

Transmembrane regions (helical) follow at residues 11 to 31, 87 to 107, 116 to 136, and 158 to 178; these read VLIAALVLGYACGAIPFGLIL, PALAAGLGAFLGHLFPVWLGF, FIGVLLALSPVTLAAFAAIWL, and LILWALGHGAVAALFLVLAAL.

The protein belongs to the PlsY family. In terms of assembly, probably interacts with PlsX.

Its subcellular location is the cell inner membrane. The enzyme catalyses an acyl phosphate + sn-glycerol 3-phosphate = a 1-acyl-sn-glycero-3-phosphate + phosphate. It participates in lipid metabolism; phospholipid metabolism. Catalyzes the transfer of an acyl group from acyl-phosphate (acyl-PO(4)) to glycerol-3-phosphate (G3P) to form lysophosphatidic acid (LPA). This enzyme utilizes acyl-phosphate as fatty acyl donor, but not acyl-CoA or acyl-ACP. This Methylorubrum extorquens (strain PA1) (Methylobacterium extorquens) protein is Glycerol-3-phosphate acyltransferase.